The sequence spans 142 residues: Large ribosomal subunit protein uL13 (142 aa).

It belongs to the universal ribosomal protein uL13 family. As to quaternary structure, part of the 50S ribosomal subunit.

Functionally, this protein is one of the early assembly proteins of the 50S ribosomal subunit, although it is not seen to bind rRNA by itself. It is important during the early stages of 50S assembly. This Francisella tularensis subsp. mediasiatica (strain FSC147) protein is Large ribosomal subunit protein uL13.